The sequence spans 159 residues: Nucleotide-binding protein PLES_47741 (159 aa).

The protein belongs to the YajQ family.

Its function is as follows. Nucleotide-binding protein. This Pseudomonas aeruginosa (strain LESB58) protein is Nucleotide-binding protein PLES_47741.